The primary structure comprises 443 residues: UPF0656 protein C926.02 (443 aa).

Belongs to the UPF0656 family.

The protein localises to the cytoplasm. The protein resides in the nucleus. The chain is UPF0656 protein C926.02 from Schizosaccharomyces pombe (strain 972 / ATCC 24843) (Fission yeast).